The following is a 2371-amino-acid chain: NBAS subunit of NRZ tethering complex (2371 aa).

Positions 1–1035 (MAAPESGPAL…KTEATTKLHD (1035 aa)) are interaction with USE1. WD repeat units follow at residues 130–169 (DPKP…LFVI) and 316–355 (QEQD…QQGE). Residues S473 and S475 each carry the phosphoserine modification. The segment at 1036–2371 (MVDQLEQILS…TALRAAQHWV (1336 aa)) is interaction with ZW10 and RINT1. Position 1057 is an N6-acetyllysine (K1057).

As to quaternary structure, component of the NRZ complex composed of NBAS, ZW10 and RINT1/TIP20L; NRZ associates with SNAREs STX18, USE1, BNIP1/SEC20L and SEC22B (the assembly has been described as syntaxin 18 complex); links NRZ to SNARE USE1. In terms of tissue distribution, broadly expressed, with highest levels in heart and skeletal muscle, and lowest levels in liver, small intestine and thymus. Well expressed in retinal ganglion cells, epidermal skin cells, and leukocytes. Up-regulated together with N-myc in some neuroblastoma cell lines.

The protein resides in the cytoplasm. It localises to the endoplasmic reticulum. Its subcellular location is the endoplasmic reticulum membrane. In terms of biological role, involved in Golgi-to-endoplasmic reticulum (ER) retrograde transport; the function is proposed to depend on its association in the NRZ complex which is believed to play a role in SNARE assembly at the ER. Required for normal embryonic development. May play a role in the nonsense-mediated decay pathway of mRNAs containing premature stop codons. The polypeptide is NBAS subunit of NRZ tethering complex (Homo sapiens (Human)).